Consider the following 778-residue polypeptide: LPS-assembly protein LptD (778 aa).

The N-terminal stretch at 1-23 is a signal peptide; that stretch reads MKTRYSVLSVAMTAAFYTQYAQA.

Belongs to the LptD family. Component of the lipopolysaccharide transport and assembly complex. Interacts with LptE and LptA.

It is found in the cell outer membrane. Together with LptE, is involved in the assembly of lipopolysaccharide (LPS) at the surface of the outer membrane. The chain is LPS-assembly protein LptD from Actinobacillus pleuropneumoniae serotype 5b (strain L20).